Here is a 189-residue protein sequence, read N- to C-terminus: Thymidylate kinase (189 aa).

7 to 14 lines the ATP pocket; that stretch reads GIDTAGKS.

Belongs to the thymidylate kinase family.

It carries out the reaction dTMP + ATP = dTDP + ADP. Functionally, phosphorylation of dTMP to form dTDP in both de novo and salvage pathways of dTTP synthesis. The polypeptide is Thymidylate kinase (Aliarcobacter butzleri (strain RM4018) (Arcobacter butzleri)).